The chain runs to 1074 residues: DNA double-strand break repair Rad50 ATPase (1074 aa).

ATP contacts are provided by residues arginine 12, 32–38, and glutamine 142; that span reads NGSGKSS. Coiled coils occupy residues 355–402 and 452–506; these read ELEK…REKA and NLVE…KGLG. Residues 512 to 611 enclose the Zinc-hook domain; the sequence is LENLEDFSEL…KITRLKDAKK (100 aa). The Zn(2+) site is built by cysteine 559 and cysteine 562. Coiled-coil stretches lie at residues 574-611, 649-678, 749-823, and 865-895; these read TAEE…DAKK, LKLE…LQVQ, KEKL…EILE, and TEEK…LKAL. 973 to 978 provides a ligand contact to ATP; the sequence is LLSGGE.

Belongs to the SMC family. RAD50 subfamily. Homodimer. Forms a heterotetramer composed of two Mre11 subunits and two Rad50 subunits. Zn(2+) is required as a cofactor.

In terms of biological role, part of the Rad50/Mre11 complex, which is involved in the early steps of DNA double-strand break (DSB) repair. The complex may facilitate opening of the processed DNA ends to aid in the recruitment of HerA and NurA. Rad50 controls the balance between DNA end bridging and DNA resection via ATP-dependent structural rearrangements of the Rad50/Mre11 complex. The sequence is that of DNA double-strand break repair Rad50 ATPase from Methanosarcina acetivorans (strain ATCC 35395 / DSM 2834 / JCM 12185 / C2A).